A 314-amino-acid polypeptide reads, in one-letter code: tRNA pseudouridine synthase B (314 aa).

Residue His-43 coordinates substrate. Catalysis depends on Asp-48, which acts as the Nucleophile. Positions 76, 179, and 200 each coordinate substrate.

Belongs to the pseudouridine synthase TruB family. Type 1 subfamily.

It carries out the reaction uridine(55) in tRNA = pseudouridine(55) in tRNA. Its function is as follows. Responsible for synthesis of pseudouridine from uracil-55 in the psi GC loop of transfer RNAs. The protein is tRNA pseudouridine synthase B of Shigella boydii serotype 4 (strain Sb227).